Here is a 151-residue protein sequence, read N- to C-terminus: MGGIMNKQLFSEEPEKDTKKPILSIGEEEIKLLYDIPGKYLRQFNRIKAITFSSLKSILDLLKDYREVEILIGLEEQGRELYNLEVIVEKFLKEGEEISKQAMFKDFSVYYIPNCHTKLYILESEERKIVVAGSGNLSSLAWRGPQEEFFL.

This is an uncharacterized protein from Aquifex aeolicus (strain VF5).